The primary structure comprises 90 residues: Small ribosomal subunit protein uS17 (90 aa).

The protein belongs to the universal ribosomal protein uS17 family. Part of the 30S ribosomal subunit.

One of the primary rRNA binding proteins, it binds specifically to the 5'-end of 16S ribosomal RNA. The polypeptide is Small ribosomal subunit protein uS17 (Paraburkholderia phymatum (strain DSM 17167 / CIP 108236 / LMG 21445 / STM815) (Burkholderia phymatum)).